A 569-amino-acid polypeptide reads, in one-letter code: Proline--tRNA ligase (569 aa).

The protein belongs to the class-II aminoacyl-tRNA synthetase family. ProS type 1 subfamily. As to quaternary structure, homodimer.

The protein resides in the cytoplasm. It catalyses the reaction tRNA(Pro) + L-proline + ATP = L-prolyl-tRNA(Pro) + AMP + diphosphate. In terms of biological role, catalyzes the attachment of proline to tRNA(Pro) in a two-step reaction: proline is first activated by ATP to form Pro-AMP and then transferred to the acceptor end of tRNA(Pro). As ProRS can inadvertently accommodate and process non-cognate amino acids such as alanine and cysteine, to avoid such errors it has two additional distinct editing activities against alanine. One activity is designated as 'pretransfer' editing and involves the tRNA(Pro)-independent hydrolysis of activated Ala-AMP. The other activity is designated 'posttransfer' editing and involves deacylation of mischarged Ala-tRNA(Pro). The misacylated Cys-tRNA(Pro) is not edited by ProRS. This Lactiplantibacillus plantarum (strain ATCC BAA-793 / NCIMB 8826 / WCFS1) (Lactobacillus plantarum) protein is Proline--tRNA ligase.